We begin with the raw amino-acid sequence, 1396 residues long: DNA-directed RNA polymerase subunit beta' (1396 aa).

4 residues coordinate Zn(2+): Cys70, Cys72, Cys85, and Cys88. Residues Asp460, Asp462, and Asp464 each coordinate Mg(2+). Zn(2+) contacts are provided by Cys807, Cys881, Cys888, and Cys891. Residues 1361 to 1378 (EPEEIEEPVPEDLEDETA) are compositionally biased toward acidic residues. A disordered region spans residues 1361–1396 (EPEEIEEPVPEDLEDETAGADSAQAASEESVAEGKD). Residues 1379–1389 (GADSAQAASEE) are compositionally biased toward low complexity.

The protein belongs to the RNA polymerase beta' chain family. As to quaternary structure, the RNAP catalytic core consists of 2 alpha, 1 beta, 1 beta' and 1 omega subunit. When a sigma factor is associated with the core the holoenzyme is formed, which can initiate transcription. Mg(2+) is required as a cofactor. Zn(2+) serves as cofactor.

It carries out the reaction RNA(n) + a ribonucleoside 5'-triphosphate = RNA(n+1) + diphosphate. Functionally, DNA-dependent RNA polymerase catalyzes the transcription of DNA into RNA using the four ribonucleoside triphosphates as substrates. The chain is DNA-directed RNA polymerase subunit beta' from Syntrophotalea carbinolica (strain DSM 2380 / NBRC 103641 / GraBd1) (Pelobacter carbinolicus).